The sequence spans 345 residues: tRNA-specific 2-thiouridylase MnmA (345 aa).

Residues 6 to 13 and leucine 32 each bind ATP; that span reads LMSGGVDS. Cysteine 92 acts as the Nucleophile in catalysis. A disulfide bond links cysteine 92 and cysteine 191. ATP is bound at residue glycine 116. The interaction with tRNA stretch occupies residues 138–140; that stretch reads KDQ. Residue cysteine 191 is the Cysteine persulfide intermediate of the active site. Residues 293–294 form an interaction with tRNA region; that stretch reads RY.

This sequence belongs to the MnmA/TRMU family.

It localises to the cytoplasm. It catalyses the reaction S-sulfanyl-L-cysteinyl-[protein] + uridine(34) in tRNA + AH2 + ATP = 2-thiouridine(34) in tRNA + L-cysteinyl-[protein] + A + AMP + diphosphate + H(+). In terms of biological role, catalyzes the 2-thiolation of uridine at the wobble position (U34) of tRNA, leading to the formation of s(2)U34. The chain is tRNA-specific 2-thiouridylase MnmA from Helicobacter hepaticus (strain ATCC 51449 / 3B1).